A 177-amino-acid chain; its full sequence is Large ribosomal subunit protein uL5 (177 aa).

The protein belongs to the universal ribosomal protein uL5 family. As to quaternary structure, part of the 50S ribosomal subunit. Interacts with protein L18 and the 5S rRNA, and probably with tRNAs. Forms a bridge to the 30S subunit in the 70S ribosome.

In terms of biological role, this is 1 of 5 proteins that mediates the attachment of the 5S rRNA onto the large ribosomal subunit, stabilizing the orientation of adjacent RNA domains. Forms part of the central protuberance. Modeling places the A and P site tRNAs in close proximity to this protein; the 5S rRNA and some of its associated proteins might help stabilize positioning of ribosome-bound tRNAs. In the 70S ribosome it is thought to contact protein S13 of the 30S subunit (bridge B1b), connecting the 2 subunits; this bridge is implicated in subunit movement. This is Large ribosomal subunit protein uL5 (rpl5) from Haloarcula marismortui (strain ATCC 43049 / DSM 3752 / JCM 8966 / VKM B-1809) (Halobacterium marismortui).